The sequence spans 288 residues: ATP synthase gamma chain (288 aa).

Belongs to the ATPase gamma chain family. F-type ATPases have 2 components, CF(1) - the catalytic core - and CF(0) - the membrane proton channel. CF(1) has five subunits: alpha(3), beta(3), gamma(1), delta(1), epsilon(1). CF(0) has three main subunits: a, b and c.

The protein localises to the cell membrane. Functionally, produces ATP from ADP in the presence of a proton gradient across the membrane. The gamma chain is believed to be important in regulating ATPase activity and the flow of protons through the CF(0) complex. This chain is ATP synthase gamma chain, found in Staphylococcus aureus (strain Mu3 / ATCC 700698).